The chain runs to 353 residues: Photosystem II protein D1 (353 aa).

Transmembrane regions (helical) follow at residues 29-46 (YVGW…TATI), 118-133 (HFLI…EWEL), and 142-156 (WICV…AATA). Chlorophyll a is bound at residue histidine 118. Residue tyrosine 126 coordinates pheophytin a. Aspartate 170 and glutamate 189 together coordinate [CaMn4O5] cluster. A helical transmembrane segment spans residues 197–218 (FHMLGVAGVFGGSLFSAMHGSL). Histidine 198 serves as a coordination point for chlorophyll a. A quinone is bound by residues histidine 215 and 264–265 (SF). Histidine 215 provides a ligand contact to Fe cation. A Fe cation-binding site is contributed by histidine 272. Residues 274–288 (FLAAWPVVGIWFTSL) traverse the membrane as a helical segment. 4 residues coordinate [CaMn4O5] cluster: histidine 332, glutamate 333, aspartate 342, and alanine 344. Positions 345-353 (AVKAPSIIG) are excised as a propeptide.

This sequence belongs to the reaction center PufL/M/PsbA/D family. PSII is composed of 1 copy each of membrane proteins PsbA, PsbB, PsbC, PsbD, PsbE, PsbF, PsbH, PsbI, PsbJ, PsbK, PsbL, PsbM, PsbT, PsbX, PsbY, PsbZ, Psb30/Ycf12, peripheral proteins PsbO, CyanoQ (PsbQ), PsbU, PsbV and a large number of cofactors. It forms dimeric complexes. It depends on The D1/D2 heterodimer binds P680, chlorophylls that are the primary electron donor of PSII, and subsequent electron acceptors. It shares a non-heme iron and each subunit binds pheophytin, quinone, additional chlorophylls, carotenoids and lipids. D1 provides most of the ligands for the Mn4-Ca-O5 cluster of the oxygen-evolving complex (OEC). There is also a Cl(-1) ion associated with D1 and D2, which is required for oxygen evolution. The PSII complex binds additional chlorophylls, carotenoids and specific lipids. as a cofactor. In terms of processing, tyr-161 forms a radical intermediate that is referred to as redox-active TyrZ, YZ or Y-Z. C-terminally processed by CtpA; processing is essential to allow assembly of the oxygen-evolving complex and thus photosynthetic growth.

It is found in the cellular thylakoid membrane. It catalyses the reaction 2 a plastoquinone + 4 hnu + 2 H2O = 2 a plastoquinol + O2. Functionally, photosystem II (PSII) is a light-driven water:plastoquinone oxidoreductase that uses light energy to abstract electrons from H(2)O, generating O(2) and a proton gradient subsequently used for ATP formation. It consists of a core antenna complex that captures photons, and an electron transfer chain that converts photonic excitation into a charge separation. The D1/D2 (PsbA/PsbD) reaction center heterodimer binds P680, the primary electron donor of PSII as well as several subsequent electron acceptors. The polypeptide is Photosystem II protein D1 (Prochlorothrix hollandica).